The sequence spans 160 residues: Monooxygenase AacuO (160 aa).

The protein belongs to the avfA family.

Its pathway is secondary metabolite biosynthesis. In terms of biological role, monooxygenase; part of the gene cluster that mediates the biosynthesis of the tetrahydroxanthone dimer secalonic acid D. The pathway begins with the synthesis of atrochrysone thioester by the polyketide synthase AacuL. The atrochrysone carboxyl ACP thioesterase AacuM then breaks the thioester bond and releases the atrochrysone carboxylic acid from AacuL. Atrochrysone carboxylic acid is decarboxylated by the decarboxylase AacuI, and oxidized by the anthrone oxygenase AacuG to yield emodin. Emodin is then reduced to emodin hydroquinone by a yet unidentified oxidoreductase. A-ring reduction by the short chain dehydrogenase AacuN, dehydration by the scytalone dehydratase-like protein AacuK and probable spontaneous re-oxidation, results in overall deoxygenation to chrysophanol. Baeyer-Villiger oxidation by the Baeyer-Villiger monooxygenase (BVMO) AacuH then yields monodictyphenone. Monodictyphenone is transformed into compounds with the tetrahydroxanthone skeleton via methylesterification by the methyltransferase AacuQ, followed by the action of the flavin-dependent monooxygenase AacuC, the isomerase AacuP, and the short chain dehydrogenase/reductase AacuF or AacuD. AacuF and AacuD should accept the same compound as a substrate but perform the ketoreduction with a different stereoselectivity, thus yielding blennolides B and A, respectively. In the final step of the biosynthesis, the cytochrome P450 monooxygenase AacuE accepts blennolide B and/or blennolide A to conduct the dimerization reaction to furnish the tetrahydroxanthone dimers, secalonic acids D, B, and F. This is Monooxygenase AacuO from Aspergillus aculeatus (strain ATCC 16872 / CBS 172.66 / WB 5094).